Consider the following 146-residue polypeptide: Meiotically up-regulated gene 96 protein (146 aa).

A helical transmembrane segment spans residues leucine 85 to tryptophan 104.

Its subcellular location is the cytoplasm. The protein localises to the membrane. Has a role in meiosis. The sequence is that of Meiotically up-regulated gene 96 protein (mug96) from Schizosaccharomyces pombe (strain 972 / ATCC 24843) (Fission yeast).